A 130-amino-acid chain; its full sequence is Protein YchQ (130 aa).

Over 1–9 the chain is Periplasmic; sequence MTSFSTLLS. Residues 10-28 form a helical membrane-spanning segment; that stretch reads VHLISIALSVGLLTLRFWL. The Cytoplasmic portion of the chain corresponds to 29–39; that stretch reads RYQKHPQAFAR. The chain crosses the membrane as a helical span at residues 40 to 59; that stretch reads WTRIVPPVVDTLLLLSGIAL. Over 60–73 the chain is Periplasmic; the sequence is MAKAHILPFSGQAQ. A helical transmembrane segment spans residues 74–93; that stretch reads WLTEKLFGVIIYIVLGFIAL. At 94-104 the chain is on the cytoplasmic side; sequence DYRRMHSQQAR. Residues 105–124 traverse the membrane as a helical segment; sequence IIAFPLALVVLYIIIKLATT. The Periplasmic portion of the chain corresponds to 125–130; it reads KVPLLG.

Belongs to the SirB2 family.

It localises to the cell inner membrane. The sequence is that of Protein YchQ (ychQ) from Escherichia coli (strain K12).